A 589-amino-acid polypeptide reads, in one-letter code: ABC transporter G family member 8 (589 aa).

In terms of domain architecture, ABC transporter spans 16–261 (LTTSSISYTI…LLFKGFTVPP (246 aa)). 62 to 69 (GPSGAGKS) is a binding site for ATP. The 211-residue stretch at 311 to 521 (TEISLLARRF…ALDALLINEY (211 aa)) folds into the ABC transmembrane type-2 domain. Transmembrane regions (helical) follow at residues 335–355 (ALEALVVGLVLGTIYINIGIG), 365–385 (MFAFTLTFLLSSTTETLPIFI), 412–432 (VFLPYLFVISIIYSVSVYFLI), 441–461 (FGYFVLVIWIILLMANSFVLF), 470–490 (ITGTSLVTILLAAFFLFSGYF), 499–519 (YWLFMYFFSMYKYALDALLIN), and 560–580 (FNVYVLLGFFVLYRVLCFLAL).

It belongs to the ABC transporter superfamily. ABCG family. Eye pigment precursor importer (TC 3.A.1.204) subfamily.

The protein localises to the membrane. This chain is ABC transporter G family member 8 (ABCG8), found in Arabidopsis thaliana (Mouse-ear cress).